The following is a 411-amino-acid chain: Copper resistance protein CRF1 (411 aa).

A DNA-binding region (copper-fist) is located at residues 1–40 (MVVIEGIKYACERCIRGHRVSSCTHTQQPLIRIKPKGRPA). Positions 11, 14, 23, and 25 each coordinate Zn(2+). Composition is skewed to low complexity over residues 115 to 190 (QQQA…PHSP), 205 to 214 (SSSSLSSLHS), 227 to 241 (SHNSLSAASQLANSP), and 350 to 370 (SVAANPSASASASSIQTPPSS). Disordered stretches follow at residues 115–241 (QQQA…ANSP) and 348–389 (EMSV…VSPA).

The protein localises to the nucleus. In terms of biological role, transcriptional regulator involved in resistance to high copper concentration. In Yarrowia lipolytica (strain CLIB 122 / E 150) (Yeast), this protein is Copper resistance protein CRF1 (CRF1).